Consider the following 947-residue polypeptide: DNA topoisomerase 1 (947 aa).

Residues 16–140 (RRLVIVESPT…VKRMVFHEIT (125 aa)) enclose the Toprim domain. Positions 22 and 109 each coordinate Mg(2+). The region spanning 155 to 614 (DIDLVDAQET…FYFGGNHGVS (460 aa)) is the Topo IA-type catalytic domain. Positions 189–194 (SAGRVQ) are interaction with DNA. Y343 serves as the catalytic O-(5'-phospho-DNA)-tyrosine intermediate. Disordered stretches follow at residues 733-771 (VLPK…GSLL), 846-888 (KRAG…GETN), and 910-947 (ADRR…QSPR). The span at 915–934 (RGPVKRPAKKARKVPAKKAA) shows a compositional bias: basic residues.

This sequence belongs to the type IA topoisomerase family. Monomer. Mg(2+) is required as a cofactor.

The enzyme catalyses ATP-independent breakage of single-stranded DNA, followed by passage and rejoining.. Its function is as follows. Releases the supercoiling and torsional tension of DNA, which is introduced during the DNA replication and transcription, by transiently cleaving and rejoining one strand of the DNA duplex. Introduces a single-strand break via transesterification at a target site in duplex DNA. The scissile phosphodiester is attacked by the catalytic tyrosine of the enzyme, resulting in the formation of a DNA-(5'-phosphotyrosyl)-enzyme intermediate and the expulsion of a 3'-OH DNA strand. The free DNA strand then undergoes passage around the unbroken strand, thus removing DNA supercoils. Finally, in the religation step, the DNA 3'-OH attacks the covalent intermediate to expel the active-site tyrosine and restore the DNA phosphodiester backbone. This Mycobacterium leprae (strain TN) protein is DNA topoisomerase 1.